The primary structure comprises 185 residues: Peptidyl-tRNA hydrolase (185 aa).

Tyrosine 14 contributes to the tRNA binding site. The Proton acceptor role is filled by histidine 19. Phenylalanine 64, asparagine 66, and asparagine 112 together coordinate tRNA.

Belongs to the PTH family. In terms of assembly, monomer.

Its subcellular location is the cytoplasm. It catalyses the reaction an N-acyl-L-alpha-aminoacyl-tRNA + H2O = an N-acyl-L-amino acid + a tRNA + H(+). Functionally, hydrolyzes ribosome-free peptidyl-tRNAs (with 1 or more amino acids incorporated), which drop off the ribosome during protein synthesis, or as a result of ribosome stalling. Its function is as follows. Catalyzes the release of premature peptidyl moieties from peptidyl-tRNA molecules trapped in stalled 50S ribosomal subunits, and thus maintains levels of free tRNAs and 50S ribosomes. This Levilactobacillus brevis (strain ATCC 367 / BCRC 12310 / CIP 105137 / JCM 1170 / LMG 11437 / NCIMB 947 / NCTC 947) (Lactobacillus brevis) protein is Peptidyl-tRNA hydrolase.